The chain runs to 663 residues: UvrABC system protein B (663 aa).

Residues 1–10 (MIDKRDDKPF) are compositionally biased toward basic and acidic residues. Positions 1-23 (MIDKRDDKPFKLKSKYKPSGDQP) are disordered. One can recognise a Helicase ATP-binding domain in the interval 31 to 271 (DNIEGGEKAQ…EQSIAKIQAE (241 aa)). 44–51 (GATGTGKT) contacts ATP. The short motif at 97 to 120 (YYDYYQPEAYVPSSDTYIEKDSSV) is the Beta-hairpin element. One can recognise a Helicase C-terminal domain in the interval 435–601 (QMDDLLGEIN…TIKKDIRGLI (167 aa)). Residues 627–662 (KEAINALQKQMQEAAELLDFELAAQMRDLILELKLM) form the UVR domain.

This sequence belongs to the UvrB family. In terms of assembly, forms a heterotetramer with UvrA during the search for lesions. Interacts with UvrC in an incision complex.

Its subcellular location is the cytoplasm. Functionally, the UvrABC repair system catalyzes the recognition and processing of DNA lesions. A damage recognition complex composed of 2 UvrA and 2 UvrB subunits scans DNA for abnormalities. Upon binding of the UvrA(2)B(2) complex to a putative damaged site, the DNA wraps around one UvrB monomer. DNA wrap is dependent on ATP binding by UvrB and probably causes local melting of the DNA helix, facilitating insertion of UvrB beta-hairpin between the DNA strands. Then UvrB probes one DNA strand for the presence of a lesion. If a lesion is found the UvrA subunits dissociate and the UvrB-DNA preincision complex is formed. This complex is subsequently bound by UvrC and the second UvrB is released. If no lesion is found, the DNA wraps around the other UvrB subunit that will check the other stand for damage. The protein is UvrABC system protein B of Streptococcus pyogenes serotype M2 (strain MGAS10270).